The chain runs to 345 residues: Annexin A9 (345 aa).

Annexin repeat units follow at residues 41 to 112 (FSVD…ALLQ), 113 to 184 (PTAQ…ALAK), 197 to 266 (NLAE…GLAS), and 270 to 341 (NTPL…ALCR).

Belongs to the annexin family. As to quaternary structure, homodimer. As to expression, expressed in the stratified squamous skin epithelium, but not in epithelia of other types (at protein level).

Low affinity receptor for acetylcholine known to be targeted by disease-causing pemphigus vulgaris antibodies in keratinocytes. In Homo sapiens (Human), this protein is Annexin A9 (ANXA9).